A 147-amino-acid polypeptide reads, in one-letter code: MCDLLPHVPCQDSDDIQGAFPALKNHATECGSIRTARAIVWQEPRRAHKHNCVQCQLPFLFVFTRIECCIELGPKLSIQFFIKRYRVELCNSRHAALPLDYVFSVISAISPRYAFPPSSLIPYNAFPSNLIDRMEGKSHPFHSSDRY.

This is an uncharacterized protein from Saccharomyces cerevisiae (strain ATCC 204508 / S288c) (Baker's yeast).